Reading from the N-terminus, the 666-residue chain is tRNA 5-methylaminomethyl-2-thiouridine biosynthesis bifunctional protein MnmC (666 aa).

Residues 1–253 (MSSPFVPIIT…KRHMICAHYE (253 aa)) form a tRNA (mnm(5)s(2)U34)-methyltransferase region. The interval 283 to 666 (VGGGLAGCFI…FLRKKIIQGP (384 aa)) is FAD-dependent cmnm(5)s(2)U34 oxidoreductase.

The protein in the N-terminal section; belongs to the methyltransferase superfamily. tRNA (mnm(5)s(2)U34)-methyltransferase family. This sequence in the C-terminal section; belongs to the DAO family. Requires FAD as cofactor.

The protein localises to the cytoplasm. It carries out the reaction 5-aminomethyl-2-thiouridine(34) in tRNA + S-adenosyl-L-methionine = 5-methylaminomethyl-2-thiouridine(34) in tRNA + S-adenosyl-L-homocysteine + H(+). Functionally, catalyzes the last two steps in the biosynthesis of 5-methylaminomethyl-2-thiouridine (mnm(5)s(2)U) at the wobble position (U34) in tRNA. Catalyzes the FAD-dependent demodification of cmnm(5)s(2)U34 to nm(5)s(2)U34, followed by the transfer of a methyl group from S-adenosyl-L-methionine to nm(5)s(2)U34, to form mnm(5)s(2)U34. This chain is tRNA 5-methylaminomethyl-2-thiouridine biosynthesis bifunctional protein MnmC, found in Legionella pneumophila (strain Lens).